A 413-amino-acid chain; its full sequence is Putative tRNA pseudouridine synthase C16C4.06c (413 aa).

The active-site Nucleophile is Asp96. Tyr154 contributes to the substrate binding site.

This sequence belongs to the tRNA pseudouridine synthase TruA family.

Its subcellular location is the cytoplasm. The protein localises to the nucleus. It carries out the reaction a uridine in tRNA = a pseudouridine in tRNA. This is Putative tRNA pseudouridine synthase C16C4.06c from Schizosaccharomyces pombe (strain 972 / ATCC 24843) (Fission yeast).